Consider the following 137-residue polypeptide: Large ribosomal subunit protein uL16 (137 aa).

The protein belongs to the universal ribosomal protein uL16 family. In terms of assembly, part of the 50S ribosomal subunit.

Its function is as follows. Binds 23S rRNA and is also seen to make contacts with the A and possibly P site tRNAs. This chain is Large ribosomal subunit protein uL16, found in Nitrobacter hamburgensis (strain DSM 10229 / NCIMB 13809 / X14).